Reading from the N-terminus, the 643-residue chain is Protein disulfide-isomerase A4 (643 aa).

An N-terminal signal peptide occupies residues 1–20 (MKLRKAWLLVLLLALTQLLA). Thioredoxin domains follow at residues 21-167 (AASA…EVSQ) and 167-299 (QPDW…EFLK). Residues 24–58 (AEDAHEDASDSENPIEDDDDEEEDEEDEDDLEVKE) form a disordered region. Over residues 32 to 56 (SDSENPIEDDDDEEEDEEDEDDLEV) the composition is skewed to acidic residues. The CXXC motif lies at 89–92 (CGHC). 2 disulfide bridges follow: Cys89–Cys92 and Cys204–Cys207. At Lys364 the chain carries N6-acetyllysine. The 132-residue stretch at 503–634 (FKKGKLKPVI…LSKFIDEHAT (132 aa)) folds into the Thioredoxin 3 domain. Positions 553–556 (CGHC) match the CXXC motif. Cys553 and Cys556 are oxidised to a cystine. The short motif at 640–643 (KEEL) is the Prevents secretion from ER element.

The protein belongs to the protein disulfide isomerase family. As to quaternary structure, part of a large chaperone multiprotein complex comprising DNAJB11, HSP90B1, HSPA5, HYOU, PDIA2, PDIA4, PDIA6, PPIB, SDF2L1, UGGT1 and very small amounts of ERP29, but not, or at very low levels, CALR nor CANX. Component of a complex containing at least CRELD2, MANF, MATN3 and PDIA4. In terms of processing, O-glycosylated.

It localises to the endoplasmic reticulum lumen. Its subcellular location is the melanosome. The enzyme catalyses Catalyzes the rearrangement of -S-S- bonds in proteins.. The sequence is that of Protein disulfide-isomerase A4 (Pdia4) from Rattus norvegicus (Rat).